The sequence spans 313 residues: Deoxyribonucleoside regulator (313 aa).

The segment at residues 23–42 (QQQIAEQLNISRPTVSRLLQ) is a DNA-binding region (H-T-H motif).

Belongs to the SorC transcriptional regulatory family. Homooctamer.

In terms of biological role, negative regulator of the dra-nupC-pdp operon. DeoR binds cooperatively to the operator DNA, which consists of a palindrome and a direct repeat sequence located 3' to the palindrome. The protein is Deoxyribonucleoside regulator of Bacillus subtilis (strain 168).